Reading from the N-terminus, the 586-residue chain is Non-structural glycoprotein GNS (586 aa).

The N-terminal stretch at 1 to 14 (MFLQLFNIVLIYGV) is a signal peptide. Residues 15 to 544 (RTSQSTWINY…QNKEYWNEES (530 aa)) lie on the Extracellular side of the membrane. Residues asparagine 27, asparagine 68, asparagine 274, asparagine 350, asparagine 383, asparagine 476, asparagine 501, and asparagine 521 are each glycosylated (N-linked (GlcNAc...) asparagine; by host). Residues 545 to 562 (SIWGISTIITVLGIYYIY) form a helical membrane-spanning segment. The Cytoplasmic portion of the chain corresponds to 563–586 (RKNRREKIFLNMKHRVQRFFKLDY).

Belongs to the ephemerovirus glycoprotein family.

Its subcellular location is the host membrane. The chain is Non-structural glycoprotein GNS (GNS) from Bos taurus (Bovine).